We begin with the raw amino-acid sequence, 316 residues long: MSENIPDIDPNELLPNAPGQHQDLGVDNPPEPDNASIRAERGSPTPSSVTVDNAPSLPDRSFSHLPINDPFSGEIPEVPIPSSAISISSQALSDPVPTPSDTSRPGILRNDEQGSTSSHPVDPQEPNEVNNEYLAHLLDLGFDEYTAVLALKRTNSAGVEQAVAWIVERSNESDFDEDSSSSENEADEEMGAVQSVAGRTHKMVLVANMSLKMGTGKIAAQVGHATLGVYRQAMNSENGQNAIAAWTRHGQVKIVVKGQSTEQLMDLCKVAKDAGCYYYLVQDAGYTQIPAGSRTVLGIFGTVEQVDSVTGGLKLL.

The disordered stretch occupies residues 1 to 127 (MSENIPDIDP…SHPVDPQEPN (127 aa)). Residues 44-53 (PTPSSVTVDN) show a composition bias toward polar residues. Residues 75 to 89 (IPEVPIPSSAISISS) are compositionally biased toward low complexity. A UBA domain is found at 128-169 (EVNNEYLAHLLDLGFDEYTAVLALKRTNSAGVEQAVAWIVER). The tract at residues 170–193 (SNESDFDEDSSSSENEADEEMGAV) is disordered. Positions 173–190 (SDFDEDSSSSENEADEEM) are enriched in acidic residues.

This sequence belongs to the PTH2 family.

The catalysed reaction is an N-acyl-L-alpha-aminoacyl-tRNA + H2O = an N-acyl-L-amino acid + a tRNA + H(+). The natural substrate for this enzyme may be peptidyl-tRNAs which drop off the ribosome during protein synthesis. The chain is Probable peptidyl-tRNA hydrolase 2 from Caenorhabditis elegans.